Consider the following 189-residue polypeptide: Shikimate kinase (189 aa).

11–16 (GTGKSA) is an ATP binding site. Serine 15 contacts Mg(2+). Residues aspartate 33, arginine 57, and glycine 79 each contribute to the substrate site. Arginine 117 serves as a coordination point for ATP. Arginine 135 is a binding site for substrate.

The protein belongs to the shikimate kinase family. Monomer. Mg(2+) serves as cofactor.

It localises to the cytoplasm. It catalyses the reaction shikimate + ATP = 3-phosphoshikimate + ADP + H(+). It functions in the pathway metabolic intermediate biosynthesis; chorismate biosynthesis; chorismate from D-erythrose 4-phosphate and phosphoenolpyruvate: step 5/7. Its function is as follows. Catalyzes the specific phosphorylation of the 3-hydroxyl group of shikimic acid using ATP as a cosubstrate. The sequence is that of Shikimate kinase from Desulforudis audaxviator (strain MP104C).